A 93-amino-acid polypeptide reads, in one-letter code: Stromal cell-derived factor 1 (93 aa).

The N-terminal stretch at Met-1–Gly-21 is a signal peptide. Residues Lys-22–Pro-23 carry the Receptor activation motif motif. The receptor and heparin binding stretch occupies residues Arg-29–Arg-33. Cystine bridges form between Cys-30–Cys-55 and Cys-32–Cys-71. Receptor binding stretches follow at residues Val-39–Arg-41, Lys-48–Leu-50, and Val-60–Val-70. Residues Arg-41–Asn-51, Arg-62, Gln-69, and Lys-85 each bind heparin.

This sequence belongs to the intercrine alpha (chemokine CxC) family. As to quaternary structure, monomer or homodimer; in equilibrium. Dimer formation is induced by non acidic pH and the presence of multivalent anions, and by binding to CXCR4 or heparin. Monomeric form is required for full chemotactic activity and resistance to ischemia/reperfusion injury, whereas the dimeric form acts as a partial agonist of CXCR4, stimulating Ca2+ mobilization but with no chemotactic activity and instead acts as a selective antagonist that blocks chemotaxis induced by the monomeric form. Interacts with the N-terminus of ACKR3. Interacts with integrin subunit ITGB3 (via the allosteric site (site 2)). Interacts with TNFAIP6 (via Link domain). (Microbial infection) Interacts with molluscum contagiosum virus protein MC148. Post-translationally, processed forms SDF-1-beta(3-72) and SDF-1-alpha(3-67) are produced after secretion by proteolytic cleavage of isoforms Beta and Alpha, respectively. The N-terminal processing is probably achieved by DPP4. Isoform Alpha is first cleaved at the C-terminus to yield a SDF-1-alpha(1-67) intermediate before being processed at the N-terminus. The C-terminal processing of isoform Alpha is reduced by binding to heparin and, probably, cell surface proteoglycans. Isoform Alpha and isoform Beta are ubiquitously expressed, with highest levels detected in liver, pancreas and spleen. Isoform Gamma is mainly expressed in heart, with weak expression detected in several other tissues. Isoform Delta, isoform Epsilon and isoform Theta have highest expression levels in pancreas, with lower levels detected in heart, kidney, liver and spleen.

It localises to the secreted. Its function is as follows. Chemoattractant active on T-lymphocytes and monocytes but not neutrophils. Activates the C-X-C chemokine receptor CXCR4 to induce a rapid and transient rise in the level of intracellular calcium ions and chemotaxis. SDF-1-beta(3-72) and SDF-1-alpha(3-67) show a reduced chemotactic activity. Binding to cell surface proteoglycans seems to inhibit formation of SDF-1-alpha(3-67) and thus to preserve activity on local sites. Also binds to atypical chemokine receptor ACKR3, which activates the beta-arrestin pathway and acts as a scavenger receptor for SDF-1. Binds to the allosteric site (site 2) of integrins and activates integrins ITGAV:ITGB3, ITGA4:ITGB1 and ITGA5:ITGB1 in a CXCR4-independent manner. Acts as a positive regulator of monocyte migration and a negative regulator of monocyte adhesion via the LYN kinase. Stimulates migration of monocytes and T-lymphocytes through its receptors, CXCR4 and ACKR3, and decreases monocyte adherence to surfaces coated with ICAM-1, a ligand for beta-2 integrins. SDF1A/CXCR4 signaling axis inhibits beta-2 integrin LFA-1 mediated adhesion of monocytes to ICAM-1 through LYN kinase. Inhibits CXCR4-mediated infection by T-cell line-adapted HIV-1. Plays a protective role after myocardial infarction. Induces down-regulation and internalization of ACKR3 expressed in various cells. Has several critical functions during embryonic development; required for B-cell lymphopoiesis, myelopoiesis in bone marrow and heart ventricular septum formation. Stimulates the proliferation of bone marrow-derived B-cell progenitors in the presence of IL7 as well as growth of stromal cell-dependent pre-B-cells. The polypeptide is Stromal cell-derived factor 1 (CXCL12) (Homo sapiens (Human)).